A 399-amino-acid polypeptide reads, in one-letter code: UDP-N-acetylglucosamine--N-acetylmuramyl-(pentapeptide) pyrophosphoryl-undecaprenol N-acetylglucosamine transferase (399 aa).

Basic residues predominate over residues 1-21 (MTSRFGHSHHPRRGRSARARA). The interval 1 to 30 (MTSRFGHSHHPRRGRSARARAGRREGVQSN) is disordered. UDP-N-acetyl-alpha-D-glucosamine-binding positions include 58–60 (TGG), asparagine 170, arginine 206, serine 234, isoleucine 288, and glutamine 333.

It belongs to the glycosyltransferase 28 family. MurG subfamily.

The protein localises to the cell inner membrane. The catalysed reaction is di-trans,octa-cis-undecaprenyl diphospho-N-acetyl-alpha-D-muramoyl-L-alanyl-D-glutamyl-meso-2,6-diaminopimeloyl-D-alanyl-D-alanine + UDP-N-acetyl-alpha-D-glucosamine = di-trans,octa-cis-undecaprenyl diphospho-[N-acetyl-alpha-D-glucosaminyl-(1-&gt;4)]-N-acetyl-alpha-D-muramoyl-L-alanyl-D-glutamyl-meso-2,6-diaminopimeloyl-D-alanyl-D-alanine + UDP + H(+). It participates in cell wall biogenesis; peptidoglycan biosynthesis. Functionally, cell wall formation. Catalyzes the transfer of a GlcNAc subunit on undecaprenyl-pyrophosphoryl-MurNAc-pentapeptide (lipid intermediate I) to form undecaprenyl-pyrophosphoryl-MurNAc-(pentapeptide)GlcNAc (lipid intermediate II). The sequence is that of UDP-N-acetylglucosamine--N-acetylmuramyl-(pentapeptide) pyrophosphoryl-undecaprenol N-acetylglucosamine transferase from Acidovorax ebreus (strain TPSY) (Diaphorobacter sp. (strain TPSY)).